The primary structure comprises 760 residues: H(+)/Cl(-) exchange transporter 4 (760 aa).

At M1 to A67 the chain is on the cytoplasmic side. Residues M14–S63 are required for localization in the endoplasmic reticulum. 2 helical membrane passes run W68–S105 and L151–F174. Positions G180 to P184 match the Selectivity filter part_1 motif. S181 serves as a coordination point for chloride. The helical intramembrane region spans I183–L190. Helical transmembrane passes span G200 to G218 and E224 to S243. The short motif at G222–P226 is the Selectivity filter part_2 element. 2 intramembrane regions (helical) span residues V255–A267 and P271–L279. A run of 5 helical transmembrane segments spans residues L291–N309, F333–R358, L365–Y385, M442–M462, and G467–G486. The short motif at G467 to P471 is the Selectivity filter part_3 element. F469 contributes to the chloride binding site. Intramembrane regions (helical) lie at residues G514–V528 and T532–T543. Residues G544–E547 constitute an intramembrane region (note=Loop between two helices). A helical membrane pass occupies residues Y548–F566. At G567–N760 the chain is on the cytoplasmic side. Y572 serves as a coordination point for chloride. In terms of domain architecture, CBS 1 spans M600–E666. ATP is bound by residues S610 and Y631–G633. Positions G667–I696 are required for localization in the endoplasmic reticulum. Residues L697–E755 enclose the CBS 2 domain. ATP is bound at residue T738 to D741.

Belongs to the chloride channel (TC 2.A.49) family. ClC-4/CLCN4 subfamily. In terms of assembly, monomer. Forms heterodimers with CLCN3. In terms of tissue distribution, abundant in skeletal muscle and also detectable in brain and heart.

The protein resides in the early endosome membrane. Its subcellular location is the late endosome membrane. The protein localises to the endoplasmic reticulum membrane. It localises to the lysosome membrane. It is found in the recycling endosome membrane. In terms of biological role, strongly outwardly rectifying, electrogenic H(+)/Cl(-)exchanger which mediates the exchange of chloride ions against protons. The CLC channel family contains both chloride channels and proton-coupled anion transporters that exchange chloride or another anion for protons. The presence of conserved gating glutamate residues is typical for family members that function as antiporters. This is H(+)/Cl(-) exchange transporter 4 (CLCN4) from Homo sapiens (Human).